Reading from the N-terminus, the 279-residue chain is Thymidylate synthase (279 aa).

Arginine 133 to arginine 134 provides a ligand contact to dUMP. Cysteine 154 functions as the Nucleophile in the catalytic mechanism. Residues arginine 178–aspartate 181, asparagine 189, and histidine 219–tyrosine 221 contribute to the dUMP site. Aspartate 181 lines the (6R)-5,10-methylene-5,6,7,8-tetrahydrofolate pocket. Residue alanine 278 participates in (6R)-5,10-methylene-5,6,7,8-tetrahydrofolate binding.

It belongs to the thymidylate synthase family. Bacterial-type ThyA subfamily. As to quaternary structure, homodimer.

Its subcellular location is the cytoplasm. The catalysed reaction is dUMP + (6R)-5,10-methylene-5,6,7,8-tetrahydrofolate = 7,8-dihydrofolate + dTMP. The protein operates within pyrimidine metabolism; dTTP biosynthesis. Functionally, catalyzes the reductive methylation of 2'-deoxyuridine-5'-monophosphate (dUMP) to 2'-deoxythymidine-5'-monophosphate (dTMP) while utilizing 5,10-methylenetetrahydrofolate (mTHF) as the methyl donor and reductant in the reaction, yielding dihydrofolate (DHF) as a by-product. This enzymatic reaction provides an intracellular de novo source of dTMP, an essential precursor for DNA biosynthesis. This Streptococcus agalactiae serotype Ia (strain ATCC 27591 / A909 / CDC SS700) protein is Thymidylate synthase.